We begin with the raw amino-acid sequence, 576 residues long: Proline--tRNA ligase (576 aa).

The protein belongs to the class-II aminoacyl-tRNA synthetase family. ProS type 1 subfamily. Homodimer.

The protein resides in the cytoplasm. The enzyme catalyses tRNA(Pro) + L-proline + ATP = L-prolyl-tRNA(Pro) + AMP + diphosphate. Functionally, catalyzes the attachment of proline to tRNA(Pro) in a two-step reaction: proline is first activated by ATP to form Pro-AMP and then transferred to the acceptor end of tRNA(Pro). As ProRS can inadvertently accommodate and process non-cognate amino acids such as alanine and cysteine, to avoid such errors it has two additional distinct editing activities against alanine. One activity is designated as 'pretransfer' editing and involves the tRNA(Pro)-independent hydrolysis of activated Ala-AMP. The other activity is designated 'posttransfer' editing and involves deacylation of mischarged Ala-tRNA(Pro). The misacylated Cys-tRNA(Pro) is not edited by ProRS. The chain is Proline--tRNA ligase from Trichlorobacter lovleyi (strain ATCC BAA-1151 / DSM 17278 / SZ) (Geobacter lovleyi).